The sequence spans 25 residues: Caerin-2.4 (25 aa).

As to expression, expressed by the skin parotoid and/or rostral glands.

The protein resides in the secreted. Antibacterial peptide, that adopts an alpha helical conformation which can disrupt bacterial membranes. Each caerin displays a different antimicrobial specificity. This is Caerin-2.4 from Ranoidea caerulea (Green tree frog).